Consider the following 90-residue polypeptide: Envelope glycoprotein N (90 aa).

Positions 1-21 (MTWKLFICFLSFGVIFLRVSS) are cleaved as a signal peptide. The Virion surface segment spans residues 22-55 (LTEKSHTTSYTILHNNNFYSNSCSADTYVPSIKT). The helical transmembrane segment at 56–76 (FSSVWAILNVIIFFCASLFYL) threads the bilayer. Residues 77–90 (RHLCIVKFISNLTK) are Intravirion-facing.

It belongs to the herpesviridae glycoprotein N family. In terms of assembly, interacts (via N-terminus) with gM (via N-terminus). The gM-gN heterodimer forms the gCII complex.

It is found in the virion membrane. The protein localises to the host membrane. Its subcellular location is the host Golgi apparatus. It localises to the host trans-Golgi network. Functionally, envelope glycoprotein necessary for proper maturation of gM and modulation of its membrane fusion activity. Also plays a critical role in virion morphogenesis. In Saimiriine herpesvirus 2 (strain 11) (SaHV-2), this protein is Envelope glycoprotein N.